A 197-amino-acid chain; its full sequence is FMN-dependent NADH:quinone oxidoreductase (197 aa).

FMN-binding positions include serine 10, 16-18 (SQS), 93-96 (MYNF), and 137-140 (TRGG).

The protein belongs to the azoreductase type 1 family. Homodimer. Requires FMN as cofactor.

It carries out the reaction 2 a quinone + NADH + H(+) = 2 a 1,4-benzosemiquinone + NAD(+). The catalysed reaction is N,N-dimethyl-1,4-phenylenediamine + anthranilate + 2 NAD(+) = 2-(4-dimethylaminophenyl)diazenylbenzoate + 2 NADH + 2 H(+). Functionally, quinone reductase that provides resistance to thiol-specific stress caused by electrophilic quinones. Its function is as follows. Also exhibits azoreductase activity. Catalyzes the reductive cleavage of the azo bond in aromatic azo compounds to the corresponding amines. The sequence is that of FMN-dependent NADH:quinone oxidoreductase from Shewanella denitrificans (strain OS217 / ATCC BAA-1090 / DSM 15013).